Here is a 256-residue protein sequence, read N- to C-terminus: tRNA pseudouridine synthase A 1 (256 aa).

Asp-53 acts as the Nucleophile in catalysis. Tyr-111 provides a ligand contact to substrate.

It belongs to the tRNA pseudouridine synthase TruA family. Homodimer.

The catalysed reaction is uridine(38/39/40) in tRNA = pseudouridine(38/39/40) in tRNA. In terms of biological role, formation of pseudouridine at positions 38, 39 and 40 in the anticodon stem and loop of transfer RNAs. This is tRNA pseudouridine synthase A 1 from Protochlamydia amoebophila (strain UWE25).